A 673-amino-acid chain; its full sequence is DNA ligase (673 aa).

NAD(+) is bound by residues 33 to 37, 82 to 83, and E114; these read DAEYD and SL. The N6-AMP-lysine intermediate role is filled by K116. The NAD(+) site is built by R137, E174, K291, and K315. Zn(2+) is bound by residues C409, C412, C427, and C433. The BRCT domain occupies 592–673; sequence AQEQPLAGLV…LINLLEQHNG (82 aa).

Belongs to the NAD-dependent DNA ligase family. LigA subfamily. Mg(2+) is required as a cofactor. The cofactor is Mn(2+).

The catalysed reaction is NAD(+) + (deoxyribonucleotide)n-3'-hydroxyl + 5'-phospho-(deoxyribonucleotide)m = (deoxyribonucleotide)n+m + AMP + beta-nicotinamide D-nucleotide.. In terms of biological role, DNA ligase that catalyzes the formation of phosphodiester linkages between 5'-phosphoryl and 3'-hydroxyl groups in double-stranded DNA using NAD as a coenzyme and as the energy source for the reaction. It is essential for DNA replication and repair of damaged DNA. This Pseudoalteromonas translucida (strain TAC 125) protein is DNA ligase.